Here is a 201-residue protein sequence, read N- to C-terminus: Ependymin-related protein 2 (201 aa).

An N-terminal signal peptide occupies residues 1–21 (MILQVVLLLACLSGAIVSTGA). 2 N-linked (GlcNAc...) asparagine glycosylation sites follow: Asn38 and Asn137. A Microbody targeting signal motif is present at residues 199 to 201 (CRA).

The protein belongs to the ependymin family. In terms of tissue distribution, component of the acid-soluble and acid-insoluble organic matrix of calcified shell layers (at protein level).

Its subcellular location is the secreted. This Haliotis asinina (Donkey's ear abalone) protein is Ependymin-related protein 2.